The primary structure comprises 338 residues: Tagatose 1,6-diphosphate aldolase (338 aa).

It belongs to the aldolase LacD family.

The enzyme catalyses D-tagatofuranose 1,6-bisphosphate = D-glyceraldehyde 3-phosphate + dihydroxyacetone phosphate. The protein operates within carbohydrate metabolism; D-tagatose 6-phosphate degradation; D-glyceraldehyde 3-phosphate and glycerone phosphate from D-tagatose 6-phosphate: step 2/2. This Listeria monocytogenes serotype 4a (strain HCC23) protein is Tagatose 1,6-diphosphate aldolase.